We begin with the raw amino-acid sequence, 296 residues long: Protease HtpX homolog (296 aa).

2 consecutive transmembrane segments (helical) span residues 14–34 (VVLL…VGYL) and 39–59 (YQFG…SMIF). H143 serves as a coordination point for Zn(2+). E144 is a catalytic residue. Zn(2+) is bound at residue H147. Helical transmembrane passes span 158 to 178 (IAVA…RMLF) and 195 to 215 (ILVL…ASLV). A Zn(2+)-binding site is contributed by E224.

It belongs to the peptidase M48B family. Zn(2+) is required as a cofactor.

The protein resides in the cell membrane. This is Protease HtpX homolog from Streptococcus agalactiae serotype III (strain NEM316).